Consider the following 677-residue polypeptide: Epithelial splicing regulatory protein 1 (677 aa).

RRM domains lie at 225–302, 326–406, and 445–525; these read TVVR…KATG, VIVR…RSTA, and DCVR…QCSA. Position 543 is a phosphoserine (serine 543). At arginine 578 the chain carries Omega-N-methylarginine.

Belongs to the ESRP family.

The protein localises to the nucleus. MRNA splicing factor that regulates the formation of epithelial cell-specific isoforms. Specifically regulates the expression of FGFR2-IIIb, an epithelial cell-specific isoform of FGFR2. Also regulates the splicing of CD44, CTNND1, ENAH, 3 transcripts that undergo changes in splicing during the epithelial-to-mesenchymal transition (EMT). Acts by directly binding specific sequences in mRNAs. Binds the GU-rich sequence motifs in the ISE/ISS-3, a cis-element regulatory region present in the mRNA of FGFR2. Regulates splicing and expression of genes involved in inner ear development, auditory hair cell differentiation, and cell fate specification in the cochlear epithelium. In Rattus norvegicus (Rat), this protein is Epithelial splicing regulatory protein 1 (Esrp1).